The chain runs to 170 residues: tRNA-splicing endonuclease (170 aa).

Catalysis depends on residues Tyr-110, His-116, and Lys-147.

It belongs to the tRNA-intron endonuclease family. Archaeal short subfamily. Homotetramer; although the tetramer contains four active sites, only two participate in the cleavage. Therefore, it should be considered as a dimer of dimers.

It catalyses the reaction pretRNA = a 3'-half-tRNA molecule with a 5'-OH end + a 5'-half-tRNA molecule with a 2',3'-cyclic phosphate end + an intron with a 2',3'-cyclic phosphate and a 5'-hydroxyl terminus.. Endonuclease that removes tRNA introns. Cleaves pre-tRNA at the 5'- and 3'-splice sites to release the intron. The products are an intron and two tRNA half-molecules bearing 2',3' cyclic phosphate and 5'-OH termini. Recognizes a pseudosymmetric substrate in which 2 bulged loops of 3 bases are separated by a stem of 4 bp. This is tRNA-splicing endonuclease from Pyrococcus horikoshii (strain ATCC 700860 / DSM 12428 / JCM 9974 / NBRC 100139 / OT-3).